Here is a 182-residue protein sequence, read N- to C-terminus: Ribosome-recycling factor (182 aa).

It belongs to the RRF family.

Its subcellular location is the cytoplasm. Its function is as follows. Responsible for the release of ribosomes from messenger RNA at the termination of protein biosynthesis. May increase the efficiency of translation by recycling ribosomes from one round of translation to another. This chain is Ribosome-recycling factor, found in Synechococcus sp. (strain JA-2-3B'a(2-13)) (Cyanobacteria bacterium Yellowstone B-Prime).